Reading from the N-terminus, the 235-residue chain is TIR domain-containing adapter molecule 2 (235 aa).

The segment at 1–39 (MGIGKSKINSCPLSLSWGKRHSVDTSPGYHESDSKKSED) is disordered. Gly2 carries the N-myristoyl glycine lipid modification. Ser16 carries the post-translational modification Phosphoserine; by PKC/PRKCE. Positions 30 to 39 (HESDSKKSED) are enriched in basic and acidic residues. A TIR domain is found at 73-229 (AEEEVFLKFV…TIWKETRNMV (157 aa)). Phosphotyrosine is present on Tyr167.

In terms of assembly, homodimer. Interacts with TLR4, TICAM1, IRF3 and IRF7 in response to LPS. Interacts with IL1R1, IL1RAP, IRAK2, IRAK3 and TRAF6. Interacts with protein kinase-inactive mutants of IRAK1 and IRAK4. Isoform 1 interacts with isoform 2; the interaction occurs in late endosomes and disrupts the interaction between isoform 1 and TICAM1. Interacts with MYD88; the interaction decreases after IL-18 stimulation in a time-dependent manner. Interacts with IL18R1 and IL18RAP. Interacts with TLR2. Interacts with RAB11FIP2. In terms of processing, phosphorylated by PRKCE in response to LPS. Phosphorylation is essential for its function. It is depleted from the membrane upon phosphorylation. Tyrosine phosphorylation is inhibited by phosphatase PTPN4. Post-translationally, isoform 1 is myristoylated. Required for membrane association which is critical for its ability to initiate efficient signaling. As to expression, expressed in spleen, prostate, testis, uterus, small intestine, colon, peripheral blood leukocytes, heart, placenta, lung, liver, skeletal muscle, and pancreas Isoform 2 is ubiquitously expressed (at lower levels than isoform 1).

The protein localises to the cytoplasm. Its subcellular location is the golgi apparatus. It localises to the cell membrane. It is found in the endoplasmic reticulum. The protein resides in the early endosome membrane. The protein localises to the late endosome membrane. Its subcellular location is the cell projection. It localises to the phagocytic cup. In terms of biological role, functions as a sorting adapter in different signaling pathways to facilitate downstream signaling leading to type I interferon induction. In TLR4 signaling, physically bridges TLR4 and TICAM1 and functionally transmits signal to TICAM1 in early endosomes after endocytosis of TLR4. In TLR2 signaling, physically bridges TLR2 and MYD88 and is required for the TLR2-dependent movement of MYD88 to endosomes following ligand engagement. Involved in IL-18 signaling and is proposed to function as a sorting adapter for MYD88 in IL-18 signaling during adaptive immune response. Forms a complex with RAB11FIP2 that is recruited to the phagosomes to promote the activation of the actin-regulatory GTPases RAC1 and CDC42 and subsequent phagocytosis of Gram-negative bacteria. Proposed to inhibit LPS-TLR4 signaling at the late endosome by interaction with isoform 1 thereby disrupting the association of isoform 1 with TICAM1. May be involved in TLR4 degradation in late endosomes. This chain is TIR domain-containing adapter molecule 2 (TICAM2), found in Homo sapiens (Human).